The chain runs to 142 residues: MPTPSMEDYIEQIYLLIDEKGYARVSDIAEALSVHPSSVTKMVQKLDKDEYLIYEKYRGLVLTTKGKKIGERLVYRHDLLEQFMRIIGVDESKIYNDVEGIEHHLSWEAIDRIGDLVQYFEQDTVRVETLRGVQRANEEKSN.

The HTH dtxR-type domain occupies Met-1–Thr-63. Mn(2+) is bound by residues Asp-8, Glu-11, His-77, Glu-99, Glu-102, and His-103.

It belongs to the DtxR/MntR family. In terms of assembly, homodimer.

It localises to the cytoplasm. Its activity is regulated as follows. DNA binding is strongly activated by Mn(2+). Functionally, central regulator of manganese homeostasis. This chain is HTH-type transcriptional regulator MntR, found in Bacillus cereus (strain ATCC 14579 / DSM 31 / CCUG 7414 / JCM 2152 / NBRC 15305 / NCIMB 9373 / NCTC 2599 / NRRL B-3711).